A 154-amino-acid chain; its full sequence is Myoglobin (154 aa).

The region spanning 2 to 148 (GLSDGEWQLV…FRKDIAAKYK (147 aa)) is the Globin domain. Position 4 is a phosphoserine (S4). H65 contributes to the nitrite binding site. O2 is bound at residue H65. A Phosphothreonine modification is found at T68. H94 contributes to the heme b binding site.

It belongs to the globin family. In terms of assembly, monomeric.

It is found in the cytoplasm. It localises to the sarcoplasm. It catalyses the reaction Fe(III)-heme b-[protein] + nitric oxide + H2O = Fe(II)-heme b-[protein] + nitrite + 2 H(+). The enzyme catalyses H2O2 + AH2 = A + 2 H2O. In terms of biological role, monomeric heme protein which primary function is to store oxygen and facilitate its diffusion within muscle tissues. Reversibly binds oxygen through a pentacoordinated heme iron and enables its timely and efficient release as needed during periods of heightened demand. Depending on the oxidative conditions of tissues and cells, and in addition to its ability to bind oxygen, it also has a nitrite reductase activity whereby it regulates the production of bioactive nitric oxide. Under stress conditions, like hypoxia and anoxia, it also protects cells against reactive oxygen species thanks to its pseudoperoxidase activity. This chain is Myoglobin (MB), found in Globicephala melas (Long-finned pilot whale).